The sequence spans 207 residues: Microtubule-associated protein Jupiter (207 aa).

Serine 30 carries the post-translational modification Phosphoserine. Phosphothreonine occurs at positions 41 and 102. 3 positions are modified to phosphoserine: serine 111, serine 138, and serine 149. Disordered stretches follow at residues 129–174 (KGKY…YKAG) and 188–207 (GNQV…SGLW). Residues 136-149 (SGSVSSASSSVSSS) show a composition bias toward low complexity. Over residues 150-164 (TENLKINVGNRSDGN) the composition is skewed to polar residues.

The protein belongs to the MAP Jupiter family.

The protein resides in the nucleus. The protein localises to the cytoplasm. Its subcellular location is the cytoskeleton. It is found in the spindle. In terms of biological role, binds to all microtubule populations. The chain is Microtubule-associated protein Jupiter from Drosophila grimshawi (Hawaiian fruit fly).